We begin with the raw amino-acid sequence, 445 residues long: ATPase PAAT (445 aa).

4 positions are modified to phosphoserine: Ser-177, Ser-182, Ser-254, and Ser-302. Positions 426 to 445 (PTGIPLRHYDSGERLSNGER) are disordered. Over residues 432–445 (RHYDSGERLSNGER) the composition is skewed to basic and acidic residues.

As to quaternary structure, homodimer. Interacts with ABCB7, ABCB8/MITOSUR and ABCB10.

It is found in the cytoplasm. The protein localises to the mitochondrion. The catalysed reaction is ATP + H2O = ADP + phosphate + H(+). Its function is as follows. ATPase that regulates mitochondrial ABC transporters ABCB7, ABCB8/MITOSUR and ABCB10. Regulates mitochondrial ferric concentration and heme biosynthesis and plays a role in the maintenance of mitochondrial homeostasis and cell survival. This is ATPase PAAT from Homo sapiens (Human).